The sequence spans 305 residues: UDP-3-O-acyl-N-acetylglucosamine deacetylase (305 aa).

Positions 79, 238, and 242 each coordinate Zn(2+). Residue histidine 265 is the Proton donor of the active site.

It belongs to the LpxC family. Zn(2+) serves as cofactor.

The enzyme catalyses a UDP-3-O-[(3R)-3-hydroxyacyl]-N-acetyl-alpha-D-glucosamine + H2O = a UDP-3-O-[(3R)-3-hydroxyacyl]-alpha-D-glucosamine + acetate. It participates in glycolipid biosynthesis; lipid IV(A) biosynthesis; lipid IV(A) from (3R)-3-hydroxytetradecanoyl-[acyl-carrier-protein] and UDP-N-acetyl-alpha-D-glucosamine: step 2/6. Its function is as follows. Catalyzes the hydrolysis of UDP-3-O-myristoyl-N-acetylglucosamine to form UDP-3-O-myristoylglucosamine and acetate, the committed step in lipid A biosynthesis. This chain is UDP-3-O-acyl-N-acetylglucosamine deacetylase, found in Cronobacter sakazakii (strain ATCC BAA-894) (Enterobacter sakazakii).